We begin with the raw amino-acid sequence, 213 residues long: MWFSGKKEQTIISLFFKHIDKVEETLKCVFDLIKKYLEDTDDIESLYLRTQRLESEADRLRRKTEMEMYSGAFLPNFRGDLLGLIESVDKVANKAEYVADLIVLQKPEVPHELKDLILSQMEYSLKAYESLKSALKFLFEDLERVEEFVLAVEKYEHDEDAVERTALRKLFEMDIERSVKLEVKELIRSIGDIADRTEDVSDRAEIILLKRRF.

This sequence belongs to the UPF0111 family.

This chain is UPF0111 protein TM_0914, found in Thermotoga maritima (strain ATCC 43589 / DSM 3109 / JCM 10099 / NBRC 100826 / MSB8).